A 359-amino-acid chain; its full sequence is Probable L-ascorbate peroxidase 7, chloroplastic (359 aa).

Residues 1–71 (MAAQRLAALH…KAAGSGRSVM (71 aa)) constitute a chloroplast transit peptide. The active-site Proton acceptor is the His118. Heme b is bound at residue His247. Thr248 is a K(+) binding site. A disordered region spans residues 251–277 (RSRPERSGWGKPETKYTKNGPGAPGGQ). A compositionally biased stretch (basic and acidic residues) spans 252 to 266 (SRPERSGWGKPETKY). K(+) is bound by residues Thr280 and Asp287.

Belongs to the peroxidase family. Ascorbate peroxidase subfamily. Heme b is required as a cofactor. Expressed in roots, leaves, stems and flowers.

It localises to the plastid. Its subcellular location is the chloroplast stroma. It catalyses the reaction L-ascorbate + H2O2 = L-dehydroascorbate + 2 H2O. Functionally, plays a key role in hydrogen peroxide removal. In Oryza sativa subsp. japonica (Rice), this protein is Probable L-ascorbate peroxidase 7, chloroplastic.